The following is a 424-amino-acid chain: MGGMTIAEKILATHAGKEEVKPGEIVLAKVDFMFGNDVTTPLAIKTFRKIGVEKVFDPERIAIVLDHFTPNKDIKAAEQCKFSREFAREQGIKWFFEGGNVGVEHCLLPELGLVLPGELIIGADSHTCTYGALGAFATGVGSTDLAVAMATGEAWFRVPETIKFVYEGDLQPWVTSKDLILYTIGDIGVNGALYKVMEFSGEVIEKLSVEQRMTMTNMAIEAGAKTGIIEPDKKTIEYVKGRAKREYKIYKSDEDAKYYKVIEYDVSKIEPQVAFPHLPENTVPISKAAKMNIKIDQVVIGSCTNGRLEDLRMAAEVLEGQKVAPWVRLIILPCSPTVYFKAMKEGLLEIFLEAGAVIGPPTCGPCLGGHMGILASGERAVSTTNRNFVGRMGHPKSEVYLASPYVAAASAILGRIASPEEVVK.

C303, C363, and C366 together coordinate [4Fe-4S] cluster.

It belongs to the aconitase/IPM isomerase family. LeuC type 2 subfamily. Heterodimer of LeuC and LeuD. The cofactor is [4Fe-4S] cluster.

It carries out the reaction (2R,3S)-3-isopropylmalate = (2S)-2-isopropylmalate. The protein operates within amino-acid biosynthesis; L-leucine biosynthesis; L-leucine from 3-methyl-2-oxobutanoate: step 2/4. Catalyzes the isomerization between 2-isopropylmalate and 3-isopropylmalate, via the formation of 2-isopropylmaleate. This Pyrococcus furiosus (strain ATCC 43587 / DSM 3638 / JCM 8422 / Vc1) protein is 3-isopropylmalate dehydratase large subunit 1.